Consider the following 588-residue polypeptide: Urease subunit alpha (588 aa).

Positions 149–588 constitute a Urease domain; it reads GGIDTHIHFI…LPMAQRYFLF (440 aa). Positions 154, 156, and 237 each coordinate Ni(2+). The residue at position 237 (Lys237) is an N6-carboxylysine. His239 is a binding site for substrate. 2 residues coordinate Ni(2+): His266 and His292. His340 acts as the Proton donor in catalysis. Asp380 serves as a coordination point for Ni(2+).

Belongs to the metallo-dependent hydrolases superfamily. Urease alpha subunit family. Heterotrimer of UreA (gamma), UreB (beta) and UreC (alpha) subunits. Three heterotrimers associate to form the active enzyme. Requires Ni cation as cofactor. Carboxylation allows a single lysine to coordinate two nickel ions.

Its subcellular location is the cytoplasm. The catalysed reaction is urea + 2 H2O + H(+) = hydrogencarbonate + 2 NH4(+). The protein operates within nitrogen metabolism; urea degradation; CO(2) and NH(3) from urea (urease route): step 1/1. This Opitutus terrae (strain DSM 11246 / JCM 15787 / PB90-1) protein is Urease subunit alpha.